Consider the following 548-residue polypeptide: Phenylalanine--tRNA ligase beta subunit (548 aa).

The B5 domain maps to 275–350 (LKEDVLETTS…IAYGYNKFSG (76 aa)). D328, D334, E337, and E338 together coordinate Mg(2+).

It belongs to the phenylalanyl-tRNA synthetase beta subunit family. Type 2 subfamily. Tetramer of two alpha and two beta subunits. Mg(2+) is required as a cofactor.

It is found in the cytoplasm. It carries out the reaction tRNA(Phe) + L-phenylalanine + ATP = L-phenylalanyl-tRNA(Phe) + AMP + diphosphate + H(+). The sequence is that of Phenylalanine--tRNA ligase beta subunit from Methanocaldococcus jannaschii (strain ATCC 43067 / DSM 2661 / JAL-1 / JCM 10045 / NBRC 100440) (Methanococcus jannaschii).